The sequence spans 700 residues: AP-2 complex subunit beta (700 aa).

Residues 625 to 700 (VGNSFPPTGA…RKLSMKRPFS (76 aa)) form a disordered region. Ser-649 bears the Phosphoserine mark. Phosphothreonine is present on Thr-652. The span at 653–663 (AMMDDYDKPAE) shows a compositional bias: basic and acidic residues. At Ser-683 the chain carries Phosphoserine.

Belongs to the adaptor complexes large subunit family. Adaptor protein complex 2 (AP-2) is a heterotetramer composed of two large adaptins (alpha-type subunit APL3 and beta-type subunit APL1), a medium chain (mu-type subunit APM4) and a small adaptin (sigma-type subunit APS2). Interacts with APS2.

It localises to the cell membrane. It is found in the membrane. Its subcellular location is the coated pit. Its function is as follows. Adaptins are components of the adaptor complexes which link clathrin to receptors in coated vesicles. Clathrin-associated protein complexes are believed to interact with the cytoplasmic tails of membrane proteins, leading to their selection and concentration. Beta adaptin is a subunit of the plasma membrane adaptor. This Saccharomyces cerevisiae (strain ATCC 204508 / S288c) (Baker's yeast) protein is AP-2 complex subunit beta (APL1).